A 292-amino-acid chain; its full sequence is RNA 5'-monophosphate methyltransferase (292 aa).

The disordered stretch occupies residues 1 to 22; it reads MAASTEQATGGVEKTAAEEKPR. Residues Arg46, Asn76, Asp110, 135–136, and Met164 contribute to the S-adenosyl-L-methionine site; that span reads DF. Residues 53-274 form the Bin3-type SAM domain; sequence ELLRRLFPQS…KQATETHPIP (222 aa).

Belongs to the methyltransferase superfamily. In terms of assembly, interacts with DICER1; the interaction may be mediated by RNA.

It localises to the cytoplasm. It catalyses the reaction a 5'-end 5'-phospho-ribonucleoside-RNA + S-adenosyl-L-methionine = a 5'-end (5'-methylphospho)-ribonucleoside-RNA + S-adenosyl-L-homocysteine. It carries out the reaction a 5'-end 5'-phospho-ribonucleoside-RNA + 2 S-adenosyl-L-methionine = a 5'-end (5'-bismethylphospho)-ribonucleoside-RNA + 2 S-adenosyl-L-homocysteine. Its function is as follows. O-methyltransferase that specifically monomethylates 5'-monophosphate of cytoplasmic histidyl tRNA (tRNA(His)), acting as a capping enzyme by protecting tRNA(His) from cleavage by DICER1. Also able, with less efficiently, to methylate the 5' monophosphate of a subset of pre-miRNAs, acting as a negative regulator of miRNA processing. The 5' monophosphate of pre-miRNAs is recognized by DICER1 and is required for pre-miRNAs processing: methylation at this position reduces the processing of pre-miRNAs by DICER1. Was also reported to mediate dimethylation of pre-miR-145; however dimethylation cannot be reproduced by another group which observes a monomethylation of pre-miR-145. This is RNA 5'-monophosphate methyltransferase (BCDIN3D) from Bos taurus (Bovine).